The sequence spans 596 residues: Aspartate--tRNA(Asp/Asn) ligase (596 aa).

An L-aspartate-binding site is contributed by E175. The interval 199 to 202 (QQYK) is aspartate. 2 residues coordinate L-aspartate: R221 and H454. 221–223 (RDE) serves as a coordination point for ATP. E488 lines the ATP pocket. R495 contacts L-aspartate. Residue 540–543 (GIDR) coordinates ATP.

It belongs to the class-II aminoacyl-tRNA synthetase family. Type 1 subfamily. As to quaternary structure, homodimer.

It localises to the cytoplasm. It catalyses the reaction tRNA(Asx) + L-aspartate + ATP = L-aspartyl-tRNA(Asx) + AMP + diphosphate. Its function is as follows. Aspartyl-tRNA synthetase with relaxed tRNA specificity since it is able to aspartylate not only its cognate tRNA(Asp) but also tRNA(Asn). Reaction proceeds in two steps: L-aspartate is first activated by ATP to form Asp-AMP and then transferred to the acceptor end of tRNA(Asp/Asn). This Rhizobium leguminosarum bv. trifolii (strain WSM2304) protein is Aspartate--tRNA(Asp/Asn) ligase.